Consider the following 460-residue polypeptide: MFKSLYTRIAIYTITVMIFSAVASFLCTNIIYHNYLKENNDAKIMRTLKDSIQYQKESRIEASAPFFKHLGEMNYQVMTISEDGHRTYYGTEFRKDNISKKTAESVLHGKDYHGIKNLPYNPIITGFFENTTKNTVGIAYQSKGHTYAVFMRPDIGKTFSEFRIFLAILITLLLLFSIILVISSTYAIIKPIQQLKRATERLMHGNFDEVIHVTRKDEFGTLQYRFDKMRLSLKQLDDMRQHFVQNVSHEIKTPLTHIHHLLDLLKFAKTDNAREQYIEEIYEVTTQLSELTKALLLLSEIDNGAHLDFDDDIQLNQLIKKIIRHEQFSANEKDLIIMSDLETISMNGNERLLHQAFQNLITNAIKYSTTGGMVDVTLSQNLETITCTITDDGQGMSAETQARIFERFYKSSNHDNSNGLGLAIAKAIFELHHGTITVDSEKNAGTTFTITFKKVPKTIS.

2 consecutive transmembrane segments (helical) span residues 11–31 and 164–184; these read IYTI…TNII and IFLA…VISS. The HAMP domain maps to 186 to 238; that stretch reads YAIIKPIQQLKRATERLMHGNFDEVIHVTRKDEFGTLQYRFDKMRLSLKQLDD. Residues 246–456 enclose the Histidine kinase domain; sequence NVSHEIKTPL…TFTITFKKVP (211 aa). Phosphohistidine; by autocatalysis is present on His249.

Post-translationally, autophosphorylated.

Its subcellular location is the cell membrane. The enzyme catalyses ATP + protein L-histidine = ADP + protein N-phospho-L-histidine.. Member of the two-component regulatory system HssS/HssR involved in intracellular heme homeostasis and tempering of staphylococcal virulence. HssS functions as a heme sensor histidine kinase which is autophosphorylated at a histidine residue and transfers its phosphate group to an aspartate residue of HssR. HssR/HssS activates the expression of hrtAB, an efflux pump, in response to extracellular heme, hemin, hemoglobin or blood. The protein is Heme sensor protein HssS (hssS) of Staphylococcus saprophyticus subsp. saprophyticus (strain ATCC 15305 / DSM 20229 / NCIMB 8711 / NCTC 7292 / S-41).